The sequence spans 657 residues: Pyoverdine export ATP-binding/permease protein PvdT (657 aa).

In terms of domain architecture, ABC transporter spans 6–245 (IDLRGIRKSY…RSVNPAALQA (240 aa)). 43–50 (GASGSGKS) lines the ATP pocket. 4 consecutive transmembrane segments (helical) span residues 285–305 (ALTLLGIVIGVASVVVMLAVG), 539–559 (IAAISLLVGGIGVMNIMLMTV), 590–610 (LSVVGGLAGIVLALGMGAALL), and 620–640 (LPAVAGAFACALITGVIFGFM).

Belongs to the ABC transporter superfamily. Macrolide exporter (TC 3.A.1.122) family. Part of the tripartite efflux system PvdRT-OpmQ, which is composed of an inner membrane component with both ATPase and permease domains, PvdT, a periplasmic membrane fusion protein, PvdR, and an outer membrane component, OpmQ.

It is found in the cell inner membrane. Part of the tripartite efflux system PvdRT-OpmQ required for the secretion into the extracellular milieu of the siderophore pyoverdine (PVD), which is involved in iron acquisition. This subunit binds PVD and drives its secretion by hydrolyzing ATP. The system is responsible for export of newly synthesized PVD after the final steps of biosynthesis have taken place in the periplasm. It is also responsible for recycling of PVD after internalization of ferri-PVD into the periplasm by the outer-membrane receptor FpvA and release of iron from PVD, thus making PVD available for new cycles of iron uptake. This Pseudomonas syringae pv. syringae (strain B728a) protein is Pyoverdine export ATP-binding/permease protein PvdT.